A 987-amino-acid polypeptide reads, in one-letter code: uncharacterized protein (987 aa).

2 helical membrane-spanning segments follow: residues phenylalanine 12–glycine 32 and valine 958–leucine 978.

This sequence to M.jannaschii MJ1393 and A.fulgidus AF2028.

The protein resides in the cell membrane. This is an uncharacterized protein from Methanocaldococcus jannaschii (strain ATCC 43067 / DSM 2661 / JAL-1 / JCM 10045 / NBRC 100440) (Methanococcus jannaschii).